A 405-amino-acid polypeptide reads, in one-letter code: MDHLVFEVGTALVLVAIASVIANKIKFSIIPFLIVLGMLVGPHAPKMGIIDLTFIQSSEIIEFFGRMGVLFLLFYLGLEFSVGKLIKSGKSIAVGGTIYILINFSLGLLYGFITGFSFLEVLILAGVITISSSAIVAKVLVDLKRTANPETELILGIIMFEDIFLAVYLSVVSGLILGDATSVGSALLSILIAFGYMLLFFIAARKLPPLLNKLLDIRSNEVFIIVIFAALFFIAGFSETIHVAEAIGALLLGLVFSETEHSDRIEHLVVPFRDFFGAMFFFSFGLSIDPFSLGEAVWLALGAVILTILGNFIAGMVAGRRAGLSHKASSNIGLTIVSRGEFSIIVANLGIAGGLSATLKPFAALYVLILAILGPLVTKESKRIYRLLNKVFKWKPEVQPAKKQG.

12 helical membrane passes run 3–23, 29–49, 60–80, 85–105, 108–128, 153–173, 183–203, 222–242, 268–288, 297–317, 332–352, and 357–377; these read HLVFEVGTALVLVAIASVIAN, IIPFLIVLGMLVGPHAPKMGI, IIEFFGRMGVLFLLFYLGLEF, LIKSGKSIAVGGTIYILINFS, LLYGFITGFSFLEVLILAGVI, LILGIIMFEDIFLAVYLSVVS, VGSALLSILIAFGYMLLFFIA, VFIIVIFAALFFIAGFSETIH, LVVPFRDFFGAMFFFSFGLSI, VWLALGAVILTILGNFIAGMV, IGLTIVSRGEFSIIVANLGIA, and ATLKPFAALYVLILAILGPLV.

This sequence belongs to the monovalent cation:proton antiporter 2 (CPA2) transporter (TC 2.A.37) family. As to quaternary structure, the transporter is composed of the integral membrane protein KhtU and the regulatory protein KhtT.

It localises to the cell membrane. Its activity is regulated as follows. Potassium antiport activity requires the presence of KhtT. Activity is also modulated by KhtS. Has higher activity at alkaline pH. Potassium/proton antiporter that mediates the efflux of potassium ions from the cell. Can also mediate rubidium/proton antiport, but has no permeability for sodium or lithium ions. In the absence of KhtT, does not have antiport activity, but can catalyze potassium efflux. Involved in protection of the cell from methylglyoxal, a toxic by-product of glycolysis, via activation by S-lactoyl-BSH of the antiporter activity, leading to cytoplasmic acidification and methylglyoxal resistance. The protein is K(+)/H(+) antiporter subunit KhtU of Bacillus subtilis (strain 168).